Here is a 794-residue protein sequence, read N- to C-terminus: ATP-dependent RNA helicase SUPV3L1, mitochondrial (794 aa).

The N-terminal 30 residues, 1–30, are a transit peptide targeting the mitochondrion; it reads MRRCAWPLLRLSSRVGLALRHGGAVRLRQA. The region spanning 182–322 is the Helicase ATP-binding domain; sequence EARAIQRKII…AIDLVTELMY (141 aa). 195–202 contacts ATP; the sequence is GPTNSGKT. Residues 341–506 form the Helicase C-terminal domain; the sequence is VLDYALESLD…GLHPTPEQIE (166 aa). Disordered stretches follow at residues 678 to 741 and 764 to 794; these read EVMS…HGRG and EWQD…KKKK. A compositionally biased stretch (basic and acidic residues) spans 689 to 704; that stretch reads TKRDARTVSDHRDAKS.

Belongs to the helicase family. Mg(2+) is required as a cofactor. Requires Mn(2+) as cofactor.

Its subcellular location is the nucleus. The protein resides in the mitochondrion matrix. It is found in the mitochondrion nucleoid. The enzyme catalyses ATP + H2O = ADP + phosphate + H(+). Functionally, major helicase player in mitochondrial RNA metabolism. Component of the mitochondrial degradosome (mtEXO) complex, that degrades 3' overhang double-stranded RNA with a 3'-to-5' directionality in an ATP-dependent manner. ATPase and ATP-dependent multisubstrate helicase, able to unwind double-stranded (ds) DNA and RNA, and RNA/DNA heteroduplexes in the 5'-to-3' direction. Plays a role in the RNA surveillance system in mitochondria; regulates the stability of mature mRNAs, the removal of aberrantly formed mRNAs and the rapid degradation of non coding processing intermediates. Also implicated in recombination and chromatin maintenance pathways. May protect cells from apoptosis. Associates with mitochondrial DNA. The chain is ATP-dependent RNA helicase SUPV3L1, mitochondrial (SUPV3L1) from Gallus gallus (Chicken).